A 329-amino-acid chain; its full sequence is Formimidoylglutamase (329 aa).

His133, Asp159, His161, Asp163, Asp253, and Asp255 together coordinate Mn(2+).

Belongs to the arginase family. Mn(2+) is required as a cofactor.

It carries out the reaction N-formimidoyl-L-glutamate + H2O = formamide + L-glutamate. Its pathway is amino-acid degradation; L-histidine degradation into L-glutamate; L-glutamate from N-formimidoyl-L-glutamate (hydrolase route): step 1/1. Functionally, catalyzes the conversion of N-formimidoyl-L-glutamate to L-glutamate and formamide. The sequence is that of Formimidoylglutamase from Streptococcus gordonii (strain Challis / ATCC 35105 / BCRC 15272 / CH1 / DL1 / V288).